Here is a 414-residue protein sequence, read N- to C-terminus: MASISETSDDGSNGGVPNQKPEEPHKNPQEEKENQNENPNEADEEDDHQDEEVENVPPIPRKIPPVLIENTIAPLRRCHYPKLSLLSNAFRQVISSEDLFQVRSLIGSTEPVLYTLITFKYPTFEEGRWFILQRRNNTSLKLNCVTSLPPMFLGCTAVTIGHKIYVVGGYNFRYNKTISTVLEIDCRFNTCRHLRNMKRDRCSAVAGVIDGRIYVVAGRQRRFDDWVEVFDVETERWELVPGPFSSFASSSGKFIVHVVLDNKIYIMDGDYCFAYDPRRRRWETWGPESAQRSYWHLSSCVVDDLLYAIVPREIFGASIVVYDPRGIAWRPVMGLEFWPNLVYFESKMANFGGKLVILGCYRSSFDYYRKDVWCVEVALEKHEDGQIWGKVESLSLVNAFPMSPFFELSRTVTI.

Residues 1-61 (MASISETSDD…EVENVPPIPR (61 aa)) are disordered. A compositionally biased stretch (basic and acidic residues) spans 20-35 (KPEEPHKNPQEEKENQ). A compositionally biased stretch (acidic residues) spans 40-54 (NEADEEDDHQDEEVE). One can recognise an F-box domain in the interval 58-105 (PIPRKIPPVLIENTIAPLRRCHYPKLSLLSNAFRQVISSEDLFQVRSL). Kelch repeat units lie at residues 163 to 211 (KIYV…VIDG), 212 to 258 (RIYV…IVHV), 263 to 302 (KIYI…SCVV), and 305 to 349 (LLYA…SKMA).

This Arabidopsis thaliana (Mouse-ear cress) protein is Putative F-box/kelch-repeat protein At2g29800.